The sequence spans 139 residues: Transcription antitermination protein NusB (139 aa).

It belongs to the NusB family.

Involved in transcription antitermination. Required for transcription of ribosomal RNA (rRNA) genes. Binds specifically to the boxA antiterminator sequence of the ribosomal RNA (rrn) operons. This Salmonella agona (strain SL483) protein is Transcription antitermination protein NusB.